Consider the following 135-residue polypeptide: uncharacterized protein (135 aa).

3 helical membrane passes run 12-32 (IPIL…YNGI), 68-88 (SMIG…AKFC), and 98-118 (GILY…FYLF).

It localises to the cell membrane. This is an uncharacterized protein from Methanocaldococcus jannaschii (strain ATCC 43067 / DSM 2661 / JAL-1 / JCM 10045 / NBRC 100440) (Methanococcus jannaschii).